The chain runs to 608 residues: Protein FAM151A (608 aa).

Residues 14–34 (WILAGSVSMTLVLAISMILGL) traverse the membrane as a helical segment. The segment at 588-608 (RHRPSSRTGPSYVEGFPGESR) is disordered.

Belongs to the menorin family.

The protein resides in the membrane. The protein is Protein FAM151A (Fam151a) of Rattus norvegicus (Rat).